The primary structure comprises 433 residues: Ectonucleoside triphosphate diphosphohydrolase 5 (433 aa).

Positions 1–24 (MATTWGAAFFMLVASCVCSTVFHR) are cleaved as a signal peptide. Catalysis depends on Glu172, which acts as the Proton acceptor. An N-linked (GlcNAc...) asparagine glycan is attached at Asn232. Cystine bridges form between Cys272-Cys308 and Cys368-Cys382.

It belongs to the GDA1/CD39 NTPase family. In terms of assembly, monomer; active form. Homodimer; disulfide-linked. Homodimers are enzymatically inactive. It depends on Ca(2+) as a cofactor. The cofactor is Mg(2+). N-glycosylated; high-mannose type.

The protein resides in the endoplasmic reticulum. It localises to the secreted. The catalysed reaction is a ribonucleoside 5'-diphosphate + H2O = a ribonucleoside 5'-phosphate + phosphate + H(+). It carries out the reaction GDP + H2O = GMP + phosphate + H(+). It catalyses the reaction UDP + H2O = UMP + phosphate + H(+). The enzyme catalyses IDP + H2O = IMP + phosphate + H(+). The catalysed reaction is CDP + H2O = CMP + phosphate + H(+). It carries out the reaction ADP + H2O = AMP + phosphate + H(+). Its pathway is protein modification; protein glycosylation. Hydrolyzes nucleoside diphosphates with a preference for GDP, IDP and UDP compared to ADP and CDP. In the lumen of the endoplasmic reticulum, hydrolyzes UDP that acts as an end-product feedback inhibitor of the UDP-Glc:glycoprotein glucosyltransferases. UMP can be transported back by an UDP-sugar antiporter to the cytosol where it is consumed to regenerate UDP-glucose. Therefore, it positively regulates protein reglucosylation by clearing UDP from the ER lumen and by promoting the regeneration of UDP-glucose. Protein reglucosylation is essential to proper glycoprotein folding and quality control in the ER. The sequence is that of Ectonucleoside triphosphate diphosphohydrolase 5 (ENTPD5) from Ailuropoda melanoleuca (Giant panda).